The primary structure comprises 1577 residues: High molecular weight form of myosin-1 (1577 aa).

A Myosin motor domain is found at 75-751 (KSVDDLVQMD…EQRGLELQRN (677 aa)). Position 119 is an N6,N6,N6-trimethyllysine (Lys119). 168–175 (GESGAGKT) contributes to the ATP binding site. 2 actin-binding regions span residues 628 to 650 (LDSL…KPNS) and 730 to 744 (QVGK…PEQR). The region spanning 755-782 (ERVTIQIQAGVRRMFARRLYKRMRAIKP) is the IQ domain. Residues 1261-1401 (WTKSPIPTSL…PNVEQILAAK (141 aa)) enclose the MyTH4 domain. 2 disordered regions span residues 1442–1466 (SRPA…QQAA) and 1483–1516 (QQQQ…LPAE). Composition is skewed to low complexity over residues 1444 to 1466 (PAQA…QQAA) and 1483 to 1497 (QQQQ…QQQA). In terms of domain architecture, SH3 spans 1519 to 1577 (EEYKQVEVVYDYDGGGDAQRLVLVKGAIITVIKEYEGWAYGSTDDGQVGLYPINYTRPI).

This sequence belongs to the TRAFAC class myosin-kinesin ATPase superfamily. Myosin family. As to quaternary structure, myosin I heavy chain is single-headed.

The chain is High molecular weight form of myosin-1 from Acanthamoeba castellanii (Amoeba).